Here is a 295-residue protein sequence, read N- to C-terminus: Nucleotide-binding protein SSU98_0619 (295 aa).

An ATP-binding site is contributed by 12 to 19 (GMSGAGKT). Residue 62–65 (DMRS) coordinates GTP.

Belongs to the RapZ-like family.

Displays ATPase and GTPase activities. This is Nucleotide-binding protein SSU98_0619 from Streptococcus suis (strain 98HAH33).